The chain runs to 256 residues: MNNDVFPNKFKAALAAKQVQIGCWSALSNPISTEVLGLAGFDWLVLDGEHAPNDISTFIPQLMALKGSASAPVVRVPTNEPVIIKRLLDIGFYNFLIPFVETKEEAELAVASTRYPPEGIRGVSVSHRANMFGTVADYFAQSNKNITILVQIESQQGVDNVDAIAATEGVDGIFVGPSDLAAALGHLGNASHPDVQKAIQHIFNRASAHGKPSGILAPVEADARRYLEWGATFVAVGSDLGVFRSATQKLADTFKK.

Catalysis depends on histidine 50, which acts as the Proton acceptor. A substrate-binding site is contributed by glutamine 151. Glutamate 153 contributes to the Mg(2+) binding site. Substrate is bound by residues serine 178 and aspartate 179. Residue aspartate 179 coordinates Mg(2+).

This sequence belongs to the HpcH/HpaI aldolase family. KDGluc aldolase subfamily. Homohexamer; trimer of dimers. Requires Mg(2+) as cofactor.

It catalyses the reaction 5-dehydro-4-deoxy-D-glucarate = 2-hydroxy-3-oxopropanoate + pyruvate. The enzyme catalyses 2-dehydro-3-deoxy-D-glucarate = 2-hydroxy-3-oxopropanoate + pyruvate. It participates in carbohydrate acid metabolism; galactarate degradation; D-glycerate from galactarate: step 2/3. Its function is as follows. Catalyzes the reversible retro-aldol cleavage of both 5-keto-4-deoxy-D-glucarate and 2-keto-3-deoxy-D-glucarate to pyruvate and tartronic semialdehyde. This Escherichia coli (strain K12 / DH10B) protein is 5-keto-4-deoxy-D-glucarate aldolase.